The chain runs to 426 residues: MFVFLALITLTTCLQIPLNPTIDDFYNPPKDLETSQLGDVLKWRKMPFPVTSMFVNLPISNAWQISVRSQDTLNNSLAIVATILEPPNGDKNKLISHQAFENSPLLSCSPSYSMQVPSFETFQIQADLIFISGLLSQGWYVVVPDYEGPNSVFPVGRQSAYSVLDSIRGTIKFFNSTGNSTVKTALLGYSYGAVASLWASIVQPNYAPELELVGAAVGCTIPNITAFIEKVDEGPYSGLIVNIFNGLANEYRHFRDRLIHFGALQPLGCLFPICRKFFFQKMIGGVYDAQVLTDETIKETIEINNLLSTRAVPQIPVFLFHSKFNEMSPFLEILKLEKLWCSQLGVNLEIAEDMSYNHMVEAFSGMPAAITWIEKRWNNSTLGGCKHVHRLSNFEYPGIAPFLSQYFRSSLQMVLNNNRYFNNTTR.

Residues 1–15 (MFVFLALITLTTCLQ) form the signal peptide. N-linked (GlcNAc...) asparagine glycosylation is found at Asn-74, Asn-175, and Asn-179. Intrachain disulfides connect Cys-108–Cys-269 and Cys-341–Cys-385. Catalysis depends on Ser-190, which acts as the Charge relay system. The N-linked (GlcNAc...) asparagine glycan is linked to Asn-223. The Charge relay system role is filled by His-358. Residues Asn-378, Asn-379, Asn-422, and Asn-423 are each glycosylated (N-linked (GlcNAc...) asparagine).

This sequence belongs to the AB hydrolase superfamily. Lipase family. Class Lip subfamily.

It carries out the reaction a triacylglycerol + H2O = a diacylglycerol + a fatty acid + H(+). Functionally, secreted lipase that is able to hydrolze both the neutral triacylglycerols and the monopalmitate ester Tween 40, allowing the use of hydrolyzed products as carbon sources. Has broad lipolytic activity, which may be important for colonization and subsequent infection, therefore contributing to the persistence and virulence in human tissue. The chain is Lipase 7 from Candida albicans (strain SC5314 / ATCC MYA-2876) (Yeast).